Consider the following 272-residue polypeptide: 2-dehydro-3-deoxyphosphooctonate aldolase (272 aa).

This sequence belongs to the KdsA family.

It is found in the cytoplasm. It carries out the reaction D-arabinose 5-phosphate + phosphoenolpyruvate + H2O = 3-deoxy-alpha-D-manno-2-octulosonate-8-phosphate + phosphate. It functions in the pathway carbohydrate biosynthesis; 3-deoxy-D-manno-octulosonate biosynthesis; 3-deoxy-D-manno-octulosonate from D-ribulose 5-phosphate: step 2/3. Its pathway is bacterial outer membrane biogenesis; lipopolysaccharide biosynthesis. In Trichlorobacter lovleyi (strain ATCC BAA-1151 / DSM 17278 / SZ) (Geobacter lovleyi), this protein is 2-dehydro-3-deoxyphosphooctonate aldolase.